A 468-amino-acid chain; its full sequence is UDP-N-acetylmuramoyl-L-alanine--L-glutamate ligase (468 aa).

An ATP-binding site is contributed by 122-128; it reads GTKGKST.

The protein belongs to the MurCDEF family. MurD2 subfamily.

Its subcellular location is the cytoplasm. The catalysed reaction is UDP-N-acetyl-alpha-D-muramoyl-L-alanine + L-glutamate + ATP = UDP-N-acetyl-alpha-D-muramoyl-L-alanyl-L-glutamate + ADP + phosphate + H(+). The protein operates within cell wall biogenesis; peptidoglycan biosynthesis. In terms of biological role, cell wall formation. Catalyzes the addition of L-glutamate to the nucleotide precursor UDP-N-acetylmuramoyl-L-alanine. Has weak activity with D-glutamate. This is UDP-N-acetylmuramoyl-L-alanine--L-glutamate ligase from Xanthomonas oryzae pv. oryzae (strain MAFF 311018).